A 68-amino-acid chain; its full sequence is MKVYDCCDKVRELYSLIGSGDQGYIPQAITCAVKTLNDIAADESLPKEARERAAFAAANLLISDFEDK.

The protein belongs to the UPF0253 family.

This is UPF0253 protein VFMJ11_0680 from Aliivibrio fischeri (strain MJ11) (Vibrio fischeri).